A 206-amino-acid chain; its full sequence is Large ribosomal subunit protein uL4 (206 aa).

Residues 48–78 (THSVKTRGHVSGGGAKPWRQKGTGRARAGSN) are disordered.

This sequence belongs to the universal ribosomal protein uL4 family. Part of the 50S ribosomal subunit.

In terms of biological role, one of the primary rRNA binding proteins, this protein initially binds near the 5'-end of the 23S rRNA. It is important during the early stages of 50S assembly. It makes multiple contacts with different domains of the 23S rRNA in the assembled 50S subunit and ribosome. Its function is as follows. Forms part of the polypeptide exit tunnel. This is Large ribosomal subunit protein uL4 from Lawsonia intracellularis (strain PHE/MN1-00).